A 60-amino-acid chain; its full sequence is Naniproin (60 aa).

4 cysteine pairs are disulfide-bonded: cysteine 3/cysteine 21, cysteine 14/cysteine 38, cysteine 42/cysteine 53, and cysteine 54/cysteine 59.

Belongs to the three-finger toxin family. Short-chain subfamily. Type IA cytotoxin sub-subfamily. As to quaternary structure, monomer in solution; Homodimer and oligomer in the presence of negatively charged lipids forming a pore with a size ranging between 20 and 30 angstroms. As to expression, expressed by the venom gland.

Its subcellular location is the secreted. It is found in the target cell membrane. Functionally, basic protein that binds to cell membrane and depolarizes cardiomyocytes. This cytotoxin also possesses lytic activity on many other cells, including red blood cells. Interaction with sulfatides in the cell membrane induces pore formation and cell internalization and is responsible for cytotoxicity in cardiomyocytes. It targets the mitochondrial membrane and induces mitochondrial swelling and fragmentation. Inhibits protein kinases C. It binds to the integrin alpha-V/beta-3 with a moderate affinity. The chain is Naniproin from Naja nigricollis (Black-necked spitting cobra).